A 280-amino-acid chain; its full sequence is Putative high affinity immunoglobulin gamma Fc receptor IB (280 aa).

The N-terminal stretch at 1–15 is a signal peptide; the sequence is MWFLTTLLLWVPVDG. The Extracellular segment spans residues 16 to 198; sequence QVDTTKAVIT…LQLPTPVWFH (183 aa). Ig-like C2-type domains are found at residues 22–101 and 95–184; these read AVIT…LEIH and PIQL…ISQY. 2 disulfide bridges follow: Cys43–Cys85 and Cys124–Cys168. Residues Asn59, Asn152, and Asn163 are each glycosylated (N-linked (GlcNAc...) asparagine). Residues 199–219 form a helical membrane-spanning segment; that stretch reads VLFYLAVGIMFLVNTVLWVTI. The Cytoplasmic portion of the chain corresponds to 220–280; the sequence is RKELKRKKKW…VHRKEPQGAT (61 aa). Positions 258–280 are disordered; it reads KCQEQKEEQLQEGVHRKEPQGAT.

Belongs to the immunoglobulin superfamily. FCGR1 family.

The protein localises to the cell membrane. May bind to the Fc region of immunoglobulins gamma with a low affinity compared to FCGR1A. May function in the humoral immune response. The protein is Putative high affinity immunoglobulin gamma Fc receptor IB of Homo sapiens (Human).